Consider the following 24-residue polypeptide: M-poneritoxin-Ng1e (24 aa).

In terms of tissue distribution, expressed by the venom gland.

It localises to the secreted. It is found in the target cell membrane. In terms of biological role, has a broad spectrum of activity against both Gram-positive and Gram-negative bacteria and S.cerevisiae. Has insecticidal and hemolytic activities. May act by disrupting the integrity of the bacterial cell membrane. The protein is M-poneritoxin-Ng1e of Neoponera goeldii (Ponerine ant).